We begin with the raw amino-acid sequence, 311 residues long: Olfactory receptor 8G1 (311 aa).

Residues 1–25 (MSGENNSSVTEFILAGLSEQPELQL) are Extracellular-facing. Residues asparagine 5 and asparagine 6 are each glycosylated (N-linked (GlcNAc...) asparagine). Residues 26–46 (PLFLLFLGIYVVTVVGNLGMT) traverse the membrane as a helical segment. The Cytoplasmic portion of the chain corresponds to 47-54 (TLIWLSSH). Residues 55 to 75 (LHTPMYYFLSSLSFIDFCHST) traverse the membrane as a helical segment. The Extracellular segment spans residues 76 to 99 (VITPKMLVNFVTEKNIISYPECMT). A disulfide bridge links cysteine 97 with cysteine 189. The chain crosses the membrane as a helical span at residues 100–120 (QLYFFLVFAIAECHMLAAMAY). The Cytoplasmic portion of the chain corresponds to 121-139 (DRYMAICSPLLYSVIISNK). The helical transmembrane segment at 140–160 (ACFSLILGVYIIGLVCASVHT) threads the bilayer. Residues 161 to 197 (GCMFRVQFCKFDLINHYFCDLLPLLKLSCSSIYVNKL) lie on the Extracellular side of the membrane. The chain crosses the membrane as a helical span at residues 198 to 217 (LILCVGAFNILVPSLTILCS). The Cytoplasmic portion of the chain corresponds to 218 to 237 (YIFIIASILHIRSTEGRSKA). Residues 238-258 (FSTCSSHMLAVVIFFGSAAFM) traverse the membrane as a helical segment. At 259-271 (YLQPSSISSMDQG) the chain is on the extracellular side. A helical membrane pass occupies residues 272 to 292 (KVSSVFYTIIVPMLNPLIYSL). At 293 to 311 (RNKDVHVSLKKMLQRRTLL) the chain is on the cytoplasmic side.

This sequence belongs to the G-protein coupled receptor 1 family.

The protein resides in the cell membrane. Functionally, odorant receptor. In Homo sapiens (Human), this protein is Olfactory receptor 8G1 (OR8G1).